A 314-amino-acid chain; its full sequence is MGEGGYQQINKTLNACAFDDYLATQHARLPPLPDVEQISPRVVRVLGQNAGKFTLQGTNTYIVGTGSRRLIIDTAQGYRAWADLIESTLAQRSIRLSHVFLTHWHGDHTKGVPDLIRMDPDLAEGIYKNSPDHGQRPIEDGQVFRVEGATLRAVHAPGHSHDHMCFVLEEENALFTGDNVLGHGTSAVEDLGLYMTTLRKLQAQECAVGYPAHGAVIPNLPGKITNELAQKTRREKQCLVALDRIRNDQGRLASLTVSELIDVVHGTQLDEQVRKMALEPFMDEVLRKLAEDGHVAFRVRKGVKTWFALNTVRS.

Zn(2+) contacts are provided by His-103, His-105, Asp-107, and His-108. The active-site Proton donor/acceptor is Asp-107.

The protein belongs to the metallo-beta-lactamase superfamily. The cofactor is Zn(2+).

The catalysed reaction is atrochrysone carboxyl-[ACP] + H2O = atrochrysone carboxylate + holo-[ACP] + H(+). The protein operates within secondary metabolite biosynthesis. Atrochrysone carboxyl ACP thioesterase; part of the gene cluster that mediates the biosynthesis of agnestins, dihydroxy-xanthone metabolites. The pathway begins with the assembly and cyclization of atrochrysone thioester by the non-reducing polyketide synthase Agnpks1. The atrochrysone carboxyl ACP thioesterase AgnL7 then breaks the thioester bond and releases the atrochrysone carboxylic acid as the first enzyme-free intermediate. The decarboxylase AgnL1 then catalyzes the concerted decarboxylation-elimination required to convert atochrysone carboxylic acid into emodin anthrone, which is further oxidized to emodin by the anthrone oxygenase AgnL2. Emodin then undergoes reduction catalyzed by the oxidoreductase AgnL4 to yield the dihydroquinone tautomer which is the substrate for reduction by the short chain dehydrogenase AgnL6 reduction to produce hydroxyketone, followed by AgnL8 dehydration and likely spontaneous autoxidation to chrysophanol. Baeyer-Villiger oxidation by the oxidase AgnL3 leads to monodictyphenone via cleavage of the C-10/C-10a bond of chrysophanol. Alternative cleavage at the C-4a/C-10 bond of chrysophanol also leads to the formation some cephalone F. Further conversion to agnestins A and B, requires reduction to dihydro-monodictyphenone, oxidation to agnestin C probably via an epoxide, and rearrangement to either agnestin A or agnestin B directly, although agnestin A or agnestin B can also interconvert. Within the cluster, AgnR1 is the only unassigned oxidoreductase present which could be involved in this conversion. However, AgnR1 seems not to be involved in this step, and thus genes involved in the proposed oxidation/reduction may be located elsewhere on the genome. Further agnestin A derivatives are probably formed by spontaneous decarboxylations, dehydrations and methanolysis reactions. The sequence is that of Atrochrysone carboxyl ACP thioesterase AgnL7 from Paecilomyces divaricatus (Penicillium divaricatum).